A 371-amino-acid polypeptide reads, in one-letter code: Monomethylxanthine methyltransferase 2 (371 aa).

The S-adenosyl-L-homocysteine site is built by Tyr-18, Cys-61, Asn-66, Asp-100, Leu-101, Ser-139, Phe-140, and Cys-156. 3 residues coordinate theobromine: Tyr-157, His-160, and Trp-161. Positions 178, 260, 262, and 263 each coordinate Mg(2+). Residue Tyr-355 participates in theobromine binding.

This sequence belongs to the methyltransferase superfamily. Type-7 methyltransferase family. Mg(2+) serves as cofactor.

It carries out the reaction 7-methylxanthine + S-adenosyl-L-methionine = theobromine + S-adenosyl-L-homocysteine + H(+). It participates in alkaloid biosynthesis. In terms of biological role, involved in the biosynthesis of caffeine. Catalyzes the conversion of 7-methylxanthine (7mX) to theobromine and with a lower activity of paraxanthine to caffeine. In Coffea canephora (Robusta coffee), this protein is Monomethylxanthine methyltransferase 2.